The chain runs to 413 residues: Gamma-glutamyl phosphate reductase (413 aa).

Belongs to the gamma-glutamyl phosphate reductase family.

The protein localises to the cytoplasm. It carries out the reaction L-glutamate 5-semialdehyde + phosphate + NADP(+) = L-glutamyl 5-phosphate + NADPH + H(+). Its pathway is amino-acid biosynthesis; L-proline biosynthesis; L-glutamate 5-semialdehyde from L-glutamate: step 2/2. In terms of biological role, catalyzes the NADPH-dependent reduction of L-glutamate 5-phosphate into L-glutamate 5-semialdehyde and phosphate. The product spontaneously undergoes cyclization to form 1-pyrroline-5-carboxylate. The sequence is that of Gamma-glutamyl phosphate reductase from Anoxybacillus flavithermus (strain DSM 21510 / WK1).